We begin with the raw amino-acid sequence, 693 residues long: Sodium-dependent dopamine transporter (693 aa).

Topologically, residues 1 to 56 are cytoplasmic; sequence MSEGRCSVAHMSSVVAPAKEANAMGPKAVELVLVKEQNGVQLTNSTLLNPPQSPTE. The chain crosses the membrane as a discontinuously helical span at residues 57 to 95; it reads AQDRETWSKKADFLLSVIGFAVDLANVWRFPYLCYKNGG. Residues glycine 75, alanine 77, valine 78, aspartate 79, and asparagine 82 each coordinate Na(+). Aspartate 79 is a dopamine binding site. The next 2 helical transmembrane spans lie at 96–127 and 128–171; these read GAFL…NREG and AAGV…LSSF. Dopamine-binding residues include serine 149 and glycine 153. At 172–233 the chain is on the extracellular side; the sequence is TTELPWTHCN…SQGIDDLGPP (62 aa). Residues cysteine 180 and cysteine 189 are joined by a disulfide bond. 3 N-linked (GlcNAc...) asparagine glycosylation sites follow: asparagine 181, asparagine 196, and asparagine 202. The next 2 helical transmembrane spans lie at 234–253 and 254–284; these read RWQL…FSLW and KGVK…GITL. The Extracellular portion of the chain corresponds to 285–303; the sequence is PGAVDAIRAYLSVDFHRLC. A discontinuously helical membrane pass occupies residues 304–332; it reads EASVWIDAAIQICFSLGVGLGVLIAFSSY. Glutamine 314 is a binding site for chloride. Phenylalanine 317 is a binding site for dopamine. 2 residues coordinate Na(+): serine 318 and asparagine 350. Serine 318 is a binding site for chloride. The helical transmembrane segment at 333–373 threads the bilayer; that stretch reads NKFTNNCYRDAIITTSVNSLTSFSSGFVVFSFLGYMAQKHS. A chloride-binding site is contributed by serine 354. Topologically, residues 374-397 are extracellular; that stretch reads VPIGDVAKDGPGLIFIIYPEALAT. 3 helical membrane passes run 398 to 439, 440 to 463, and 464 to 496; these read LPLS…QLLH, RHRE…CVTN, and GGIY…AWFY. Na(+)-binding residues include leucine 415, aspartate 418, and serine 419. Residues serine 419 and alanine 420 each contribute to the dopamine site. Topologically, residues 497-513 are cytoplasmic; sequence GVWQFSDDIKQMTGRRP. Residues 514 to 539 traverse the membrane as a helical segment; the sequence is SLYWRLCWKFVSPCFLLFVVVVSIAT. Residues 540 to 550 lie on the Extracellular side of the membrane; that stretch reads FRPPHYGAYVF. A helical transmembrane segment spans residues 551 to 580; it reads PEWATALGWAIAASSMSVVPIYAAYKLCSL. An interaction with TGFB1I1 region spans residues 558 to 587; sequence GWAIAASSMSVVPIYAAYKLCSLPGSSREK. Residues 581–693 lie on the Cytoplasmic side of the membrane; sequence PGSSREKLAY…VESTGLCSVY (113 aa).

The protein belongs to the sodium:neurotransmitter symporter (SNF) (TC 2.A.22) family. SLC6A3 subfamily. In terms of assembly, monomer. Homooligomer; disulfide-linked. Interacts with PRKCABP and TGFB1I1. Interacts (via N-terminus) with SYNGR3 (via N-terminus). Interacts with SLC18A2. Interacts with TOR1A (ATP-bound); TOR1A regulates SLC6A3 subcellular location. Interacts with alpha-synuclein/SNCA. Interacts with SEPTIN4. In terms of tissue distribution, expressed in the neurons of the substantia nigra of the brain.

It localises to the cell membrane. The protein localises to the cell projection. The protein resides in the neuron projection. It is found in the axon. It catalyses the reaction dopamine(out) + chloride(out) + Na(+)(out) = dopamine(in) + chloride(in) + Na(+)(in). The catalysed reaction is (R)-noradrenaline(out) + chloride(out) + Na(+)(out) = (R)-noradrenaline(in) + chloride(in) + Na(+)(in). The enzyme catalyses dopamine(out) + chloride(out) + 2 Na(+)(out) = dopamine(in) + chloride(in) + 2 Na(+)(in). Inhibited by GBR 12909 dihydrochloride, amphetamine and cocaine. Inhibited by zinc ions. Its function is as follows. Mediates sodium- and chloride-dependent transport of dopamine. Also mediates sodium- and chloride-dependent transport of norepinephrine (also known as noradrenaline). Regulator of light-dependent retinal hyaloid vessel regression, downstream of OPN5 signaling. The sequence is that of Sodium-dependent dopamine transporter (SLC6A3) from Bos taurus (Bovine).